Consider the following 198-residue polypeptide: Dual specificity protein phosphatase 1 (198 aa).

The disordered stretch occupies residues 1 to 20; that stretch reads MSSRDRGSPSSSSSSSSLPG. Low complexity predominate over residues 8–17; sequence SPSSSSSSSS. Positions 26-47 are caM binding domain 1; that stretch reads EKVKNQIQALVRVIKVARTYRD. The Tyrosine-protein phosphatase domain occupies 50 to 191; the sequence is VPSLIEQGLY…LQDLEKSMQV (142 aa). The active-site Phosphocysteine intermediate is the Cys135. The segment at 151 to 180 is caM binding domain 2; sequence MKKHGMTLAQALQHVKSKRPVASPNAGFIR.

Belongs to the protein-tyrosine phosphatase family. Non-receptor class dual specificity subfamily. As to quaternary structure, interacts with calmodulin (CaM) in a calcium Ca(2+)-dependent manner. As to expression, expressed in roots, stems, leaves and flowers.

The protein resides in the nucleus. Its subcellular location is the cytoplasm. It carries out the reaction O-phospho-L-tyrosyl-[protein] + H2O = L-tyrosyl-[protein] + phosphate. It catalyses the reaction O-phospho-L-seryl-[protein] + H2O = L-seryl-[protein] + phosphate. The enzyme catalyses O-phospho-L-threonyl-[protein] + H2O = L-threonyl-[protein] + phosphate. Inhibited by sodium vanadate and sodium tungstate. NaF and spermifine repress specifically phosphoserine and phosphothreonine phosphatase activity. In terms of biological role, has a dual specificity toward Ser/Thr and Tyr-containing proteins. Dephosphorylates MPK4 in vitro. The sequence is that of Dual specificity protein phosphatase 1 (DSPTP1) from Arabidopsis thaliana (Mouse-ear cress).